The primary structure comprises 364 residues: GTPase Obg (364 aa).

Positions 1-159 constitute an Obg domain; it reads MKFLDEAKVY…KTIWLHLKLI (159 aa). Positions 160–327 constitute an OBG-type G domain; it reads ADAGLVGLPN…VLRALRDIIV (168 aa). GTP contacts are provided by residues 166–173, 191–195, 212–215, 279–282, and 308–310; these read GLPNAGKS, FTTLH, DIPG, SQID, and SAV. Mg(2+) is bound by residues Ser173 and Thr193. Positions 333–364 are disordered; sequence EKPAKVPKLRHRDMVVTDEGEDKGGDEGDDQP.

This sequence belongs to the TRAFAC class OBG-HflX-like GTPase superfamily. OBG GTPase family. Monomer. Mg(2+) serves as cofactor.

Its subcellular location is the cytoplasm. In terms of biological role, an essential GTPase which binds GTP, GDP and possibly (p)ppGpp with moderate affinity, with high nucleotide exchange rates and a fairly low GTP hydrolysis rate. Plays a role in control of the cell cycle, stress response, ribosome biogenesis and in those bacteria that undergo differentiation, in morphogenesis control. This chain is GTPase Obg, found in Rhizobium johnstonii (strain DSM 114642 / LMG 32736 / 3841) (Rhizobium leguminosarum bv. viciae).